We begin with the raw amino-acid sequence, 380 residues long: Chaperone protein DnaJ (380 aa).

Residues 6–71 (DYYESLEVSR…QKRAAYDRYG (66 aa)) form the J domain. The CR-type zinc-finger motif lies at 136–215 (GVTKDVEVRT…CHGTGTEAKT (80 aa)). Positions 149, 152, 167, 170, 189, 192, 203, and 206 each coordinate Zn(2+). 4 CXXCXGXG motif repeats span residues 149–156 (CEACHGSG), 167–174 (CPTCHGAG), 189–196 (CPTCHGSG), and 203–210 (CKVCHGTG).

Belongs to the DnaJ family. In terms of assembly, homodimer. It depends on Zn(2+) as a cofactor.

The protein localises to the cytoplasm. Participates actively in the response to hyperosmotic and heat shock by preventing the aggregation of stress-denatured proteins and by disaggregating proteins, also in an autonomous, DnaK-independent fashion. Unfolded proteins bind initially to DnaJ; upon interaction with the DnaJ-bound protein, DnaK hydrolyzes its bound ATP, resulting in the formation of a stable complex. GrpE releases ADP from DnaK; ATP binding to DnaK triggers the release of the substrate protein, thus completing the reaction cycle. Several rounds of ATP-dependent interactions between DnaJ, DnaK and GrpE are required for fully efficient folding. Also involved, together with DnaK and GrpE, in the DNA replication of plasmids through activation of initiation proteins. The sequence is that of Chaperone protein DnaJ from Gluconobacter oxydans (strain 621H) (Gluconobacter suboxydans).